A 337-amino-acid chain; its full sequence is Putative tRNA (cytidine(32)/guanosine(34)-2'-O)-methyltransferase (337 aa).

5 residues coordinate S-adenosyl-L-methionine: Gly53, Trp55, Asp76, Asp92, and Asp117. The active-site Proton acceptor is the Lys157. Basic and acidic residues-rich tracts occupy residues Leu304–Pro318 and Glu327–Leu337. The segment at Leu304–Leu337 is disordered.

This sequence belongs to the class I-like SAM-binding methyltransferase superfamily. RNA methyltransferase RlmE family. TRM7 subfamily.

It localises to the cytoplasm. It carries out the reaction cytidine(32)/guanosine(34) in tRNA + 2 S-adenosyl-L-methionine = 2'-O-methylcytidine(32)/2'-O-methylguanosine(34) in tRNA + 2 S-adenosyl-L-homocysteine + 2 H(+). Its function is as follows. Methylates the 2'-O-ribose of nucleotides at positions 32 and 34 of the tRNA anticodon loop of substrate tRNAs. This Caenorhabditis elegans protein is Putative tRNA (cytidine(32)/guanosine(34)-2'-O)-methyltransferase.